A 252-amino-acid chain; its full sequence is 2-succinyl-6-hydroxy-2,4-cyclohexadiene-1-carboxylate synthase (252 aa).

Belongs to the AB hydrolase superfamily. MenH family. Monomer.

It catalyses the reaction 5-enolpyruvoyl-6-hydroxy-2-succinyl-cyclohex-3-ene-1-carboxylate = (1R,6R)-6-hydroxy-2-succinyl-cyclohexa-2,4-diene-1-carboxylate + pyruvate. The protein operates within quinol/quinone metabolism; 1,4-dihydroxy-2-naphthoate biosynthesis; 1,4-dihydroxy-2-naphthoate from chorismate: step 3/7. Its pathway is quinol/quinone metabolism; menaquinone biosynthesis. In terms of biological role, catalyzes a proton abstraction reaction that results in 2,5-elimination of pyruvate from 2-succinyl-5-enolpyruvyl-6-hydroxy-3-cyclohexene-1-carboxylate (SEPHCHC) and the formation of 2-succinyl-6-hydroxy-2,4-cyclohexadiene-1-carboxylate (SHCHC). The polypeptide is 2-succinyl-6-hydroxy-2,4-cyclohexadiene-1-carboxylate synthase (Escherichia coli (strain K12 / MC4100 / BW2952)).